The chain runs to 377 residues: Chaperone MoxR1 (377 aa).

The tract at residues M1–A33 is disordered. Gly residues predominate over residues F7–T16. Over residues G19–A33 the composition is skewed to low complexity. ATP is bound at residue G78–T85.

The protein belongs to the MoxR family. Interacts with RipA. Interacts with host Toll-like receptor 4 (TLR4).

In terms of biological role, displays ATP-enhanced chaperone activity. Required for the proper folding of the peptidoglycan endopeptidase RipA and its secretion through the TAT secretion system. In vitro, prevents thermal aggregation of MalZ protein and protects the functional activity of the restriction enzyme NdeI from thermal inactivation. Functionally, could be a moonlighting protein that uses a multipronged approach to dampen host-directed immunity for efficient replication, survival and pathogenesis. Can enhance virulence by inhibiting autophagy and apoptosis, and disrupting cellular bioenergetics. Binds and activates host TLR4 on the surface of macrophage cells, leading to the activation of the host NFKB and MAPK signaling cascades and enhanced secretion of proinflammatory cytokines. Inhibits autophagic flux via activation of PI3K-AKT-MTOR-ULK1 signaling cascade and represses apoptosis via inhibiting protooncogene c-FOS and MAPK JNK1/2. Also induces robust disruption of cellular bioenergetics by metabolic reprogramming to rewire the citric acid cycle intermediates for its benefit. This chain is Chaperone MoxR1, found in Mycobacterium tuberculosis (strain ATCC 25618 / H37Rv).